A 355-amino-acid polypeptide reads, in one-letter code: UDP-3-O-acylglucosamine N-acyltransferase (355 aa).

Catalysis depends on H258, which acts as the Proton acceptor.

It belongs to the transferase hexapeptide repeat family. LpxD subfamily. Homotrimer.

The catalysed reaction is a UDP-3-O-[(3R)-3-hydroxyacyl]-alpha-D-glucosamine + a (3R)-hydroxyacyl-[ACP] = a UDP-2-N,3-O-bis[(3R)-3-hydroxyacyl]-alpha-D-glucosamine + holo-[ACP] + H(+). Its pathway is bacterial outer membrane biogenesis; LPS lipid A biosynthesis. Functionally, catalyzes the N-acylation of UDP-3-O-acylglucosamine using 3-hydroxyacyl-ACP as the acyl donor. Is involved in the biosynthesis of lipid A, a phosphorylated glycolipid that anchors the lipopolysaccharide to the outer membrane of the cell. This chain is UDP-3-O-acylglucosamine N-acyltransferase, found in Bradyrhizobium diazoefficiens (strain JCM 10833 / BCRC 13528 / IAM 13628 / NBRC 14792 / USDA 110).